Consider the following 309-residue polypeptide: Aspartate carbamoyltransferase catalytic subunit (309 aa).

Residues arginine 59 and threonine 60 each contribute to the carbamoyl phosphate site. Residue lysine 87 participates in L-aspartate binding. Residues arginine 109, histidine 139, and glutamine 142 each coordinate carbamoyl phosphate. L-aspartate is bound by residues arginine 172 and arginine 224. 2 residues coordinate carbamoyl phosphate: alanine 265 and proline 266.

This sequence belongs to the aspartate/ornithine carbamoyltransferase superfamily. ATCase family. As to quaternary structure, heterododecamer (2C3:3R2) of six catalytic PyrB chains organized as two trimers (C3), and six regulatory PyrI chains organized as three dimers (R2).

The catalysed reaction is carbamoyl phosphate + L-aspartate = N-carbamoyl-L-aspartate + phosphate + H(+). It participates in pyrimidine metabolism; UMP biosynthesis via de novo pathway; (S)-dihydroorotate from bicarbonate: step 2/3. In terms of biological role, catalyzes the condensation of carbamoyl phosphate and aspartate to form carbamoyl aspartate and inorganic phosphate, the committed step in the de novo pyrimidine nucleotide biosynthesis pathway. This chain is Aspartate carbamoyltransferase catalytic subunit, found in Streptococcus uberis (strain ATCC BAA-854 / 0140J).